The sequence spans 240 residues: Uridylate cyclase (240 aa).

Positions 45 to 180 (TYLYADMANS…RAPNLAAKLS (136 aa)) constitute a Guanylate cyclase domain. A ribonucleoside 5'-triphosphate is bound at residue tyrosine 48. Residues aspartate 50 and aspartate 94 each contribute to the Mn(2+) site. Arginine 95 serves as a coordination point for a ribonucleoside 5'-triphosphate.

This sequence belongs to the adenylyl cyclase class-4/guanylyl cyclase family. Pyrimidine cyclase subfamily. As to quaternary structure, homodimer. Requires Mn(2+) as cofactor.

The protein resides in the cytoplasm. The catalysed reaction is UTP = 3',5'-cyclic UMP + diphosphate. Pycsar (pyrimidine cyclase system for antiphage resistance) provides immunity against bacteriophage. The pyrimidine cyclase (PycC) synthesizes cyclic nucleotides in response to infection; these serve as specific second messenger signals. The signals activate the adjacent effector, leading to bacterial cell death and abortive phage infection. A clade B Pycsar system. Functionally, the pyrimidine cyclase gene of a two-gene Pycsar system, weakly generates cyclic UMP (cUMP) from UTP, has little to no activity on ATP, CTP or GTP. Expression of this and adjacent effector RsmPycTM (AC A0A1V0HUU2) probably confers resistance to bacteriophage. The genes are probably only expressed in response to bacteriophage infection. This Rhodovulum sp. (strain MB263) protein is Uridylate cyclase.